The sequence spans 177 residues: Glutamyl-tRNA(Gln) amidotransferase subunit F, mitochondrial (177 aa).

The N-terminal 16 residues, 1–16 (MIRINSRGLTVSTRRF), are a transit peptide targeting the mitochondrion. Residues 148-177 (PAKGETQGSFNVANMNPRNRPFATIRSKQG) are disordered. Residues 153-164 (TQGSFNVANMNP) are compositionally biased toward polar residues.

This sequence belongs to the GatF family. In terms of assembly, subunit of the heterotrimeric GatFAB amidotransferase (AdT) complex, composed of A, B and F subunits.

The protein localises to the mitochondrion inner membrane. It carries out the reaction L-glutamyl-tRNA(Gln) + L-glutamine + ATP + H2O = L-glutaminyl-tRNA(Gln) + L-glutamate + ADP + phosphate + H(+). Its function is as follows. Allows the formation of correctly charged Gln-tRNA(Gln) through the transamidation of misacylated Glu-tRNA(Gln) in the mitochondria. The reaction takes place in the presence of glutamine and ATP through an activated gamma-phospho-Glu-tRNA(Gln). Required for proper protein synthesis within the mitochondrion. In Scheffersomyces stipitis (strain ATCC 58785 / CBS 6054 / NBRC 10063 / NRRL Y-11545) (Yeast), this protein is Glutamyl-tRNA(Gln) amidotransferase subunit F, mitochondrial.